The following is a 355-amino-acid chain: Guanine nucleotide-binding protein subunit beta-5a (355 aa).

The tract at residues 1 to 23 (MAAQEEPAQPGDSLATLKSESDT) is disordered. WD repeat units lie at residues 63 to 102 (GHGN…KEHA), 105 to 144 (MPCT…NENL), 153 to 194 (MHTN…QSFH), 195 to 238 (GHAA…QSFE), 239 to 278 (SHDS…EVAI), 280 to 322 (SKES…RVSI), and 325 to 355 (GHEN…RIWA).

Belongs to the WD repeat G protein beta family. In terms of assembly, may interact with RGS9; this interaction stabilizes both proteins and increases RGS9 GTPase-activating protein (GAP) activity, hence accelerating the deactivation of D(2) dopamine receptor-mediated signaling.

Its subcellular location is the membrane. Its function is as follows. Enhances GTPase-activating protein (GAP) activity of regulator of G protein signaling (RGS) proteins, such as RGS7 and RGS9, hence involved in the termination of the signaling initiated by the G protein coupled receptors (GPCRs) by accelerating the GTP hydrolysis on the G-alpha subunits, thereby promoting their inactivation. Increases RGS7 GTPase-activating protein (GAP) activity, thereby regulating mood and cognition. Increases RGS9 GTPase-activating protein (GAP) activity, hence contributes to the deactivation of G protein signaling initiated by D(2) dopamine receptors. Along with gnb5b, plays an important role in neuronal signaling, including in the parasympathetic, but not sympathetic, control of heart rate. In Danio rerio (Zebrafish), this protein is Guanine nucleotide-binding protein subunit beta-5a.